The primary structure comprises 492 residues: Beclin 1-associated autophagy-related key regulator (492 aa).

At serine 29 the chain carries Phosphoserine. Positions 43 to 58 are cysteine repeats; sequence CPLCNTTRRRLTCAKC. Positions 71-180 form a coiled coil; it reads DRERFIDKKE…KLGDLVEKKT (110 aa). Residues 410–473 are disordered; the sequence is PGVAGESDES…PIASSSAGGM (64 aa). Residues 413–492 are BATS; it reads AGESDESGDE…SWFKAYTGHR (80 aa). Positions 415-433 are enriched in acidic residues; the sequence is ESDESGDERVSDEETDLGT. A Phosphoserine modification is found at serine 416. Threonine 429 bears the Phosphothreonine mark. Positions 448–473 are enriched in low complexity; the sequence is SQSVEVSQSQSTQASPPIASSSAGGM.

It belongs to the ATG14 family. In terms of assembly, forms homooligomers; homo-oligomerization is essential for the roles in membrane tethering and enhancement of SNARE-mediated fusion. Component of the PI3K (PI3KC3/PI3K-III/class III phosphatidylinositol 3-kinase) complex I (PI3KC3-C1) in which the core composed of the catalytic subunit PIK3C3, the regulatory subunit PIK3R4 and BECN1 is associated with ATG14. PI3KC3-C1 displays a V-shaped architecture with PIK3R4 serving as a bridge between PIK3C3 and the ATG14:BECN1 subcomplex. PI3KC3-C1 can associate with further regulatory subunits. Interacts with PIK3CB. Interacts (via coiled-coil domain) with BECN2 (via coiled-coil domain); this interaction is tighter than BECN2 self-association. Interacts with the STX17-SNAP29 binary t-SNARE complex. Interacts with NRBF2. Interacts with PIK3C3 and BECN1; this interaction is increased in the absence of TMEM39A. Interacts with STEEP1; the interaction is required for trafficking of STING1 from the endoplasmic reticulum. Interacts with ARMC3 (via ARM domains). Post-translationally, ubiquitinated via 'Lys-6', 'Lys-11' and 'Lys-63'-linked polyubiquitin chains on multiple lysines by MARCHF7, leading to ATG14 aggregation and loss of interaction with STX17.

Its subcellular location is the cytoplasm. The protein localises to the endoplasmic reticulum membrane. It is found in the preautophagosomal structure membrane. It localises to the cytoplasmic vesicle. The protein resides in the autophagosome membrane. Required for both basal and inducible autophagy. Determines the localization of the autophagy-specific PI3-kinase complex PI3KC3-C1. Plays a role in autophagosome formation and MAP1LC3/LC3 conjugation to phosphatidylethanolamine. Promotes BECN1 translocation from the trans-Golgi network to autophagosomes. Enhances PIK3C3 activity in a BECN1-dependent manner. Essential for the autophagy-dependent phosphorylation of BECN1. Stimulates the phosphorylation of BECN1, but suppresses the phosphorylation PIK3C3 by AMPK. Binds to STX17-SNAP29 binary t-SNARE complex on autophagosomes and primes it for VAMP8 interaction to promote autophagosome-endolysosome fusion. Modulates the hepatic lipid metabolism. In Homo sapiens (Human), this protein is Beclin 1-associated autophagy-related key regulator.